The sequence spans 149 residues: Nucleoside diphosphate kinase (149 aa).

Lys9, Phe57, Arg85, Thr91, Arg102, and Asn112 together coordinate ATP. The active-site Pros-phosphohistidine intermediate is His115.

The protein belongs to the NDK family. Homotetramer. The cofactor is Mg(2+).

It localises to the cytoplasm. It carries out the reaction a 2'-deoxyribonucleoside 5'-diphosphate + ATP = a 2'-deoxyribonucleoside 5'-triphosphate + ADP. The catalysed reaction is a ribonucleoside 5'-diphosphate + ATP = a ribonucleoside 5'-triphosphate + ADP. Major role in the synthesis of nucleoside triphosphates other than ATP. The ATP gamma phosphate is transferred to the NDP beta phosphate via a ping-pong mechanism, using a phosphorylated active-site intermediate. This is Nucleoside diphosphate kinase from Roseiflexus sp. (strain RS-1).